The following is a 402-amino-acid chain: Acetate kinase (402 aa).

Mg(2+) is bound at residue asparagine 10. Lysine 17 is a binding site for ATP. Arginine 89 contacts substrate. Aspartate 148 acts as the Proton donor/acceptor in catalysis. ATP contacts are provided by residues 208-212, 283-285, and 334-338; these read HLGNG, DCR, and GIGEN. Mg(2+) is bound at residue glutamate 389.

The protein belongs to the acetokinase family. As to quaternary structure, homodimer. Mg(2+) is required as a cofactor. It depends on Mn(2+) as a cofactor.

It is found in the cytoplasm. It carries out the reaction acetate + ATP = acetyl phosphate + ADP. It participates in metabolic intermediate biosynthesis; acetyl-CoA biosynthesis; acetyl-CoA from acetate: step 1/2. Its function is as follows. Catalyzes the formation of acetyl phosphate from acetate and ATP. Can also catalyze the reverse reaction. This is Acetate kinase from Actinobacillus pleuropneumoniae serotype 7 (strain AP76).